A 167-amino-acid polypeptide reads, in one-letter code: Signal peptidase complex subunit 3A (167 aa).

The Cytoplasmic portion of the chain corresponds to Met-1–Leu-11. Residues Leu-12–Phe-32 form a helical; Signal-anchor for type II membrane protein membrane-spanning segment. Over Ser-33–Arg-167 the chain is Lumenal. Asn-136 carries an N-linked (GlcNAc...) asparagine glycan.

This sequence belongs to the SPCS3 family. Component of the signal peptidase complex (SPC) composed of a catalytic subunit SEC11 and three accessory subunits SPCS1, SPCS2 and SPCS3. The complex induces a local thinning of the ER membrane which is used to measure the length of the signal peptide (SP) h-region of protein substrates. This ensures the selectivity of the complex towards h-regions shorter than 18-20 amino acids.

It is found in the endoplasmic reticulum membrane. Essential component of the signal peptidase complex (SPC) which catalyzes the cleavage of N-terminal signal sequences from nascent proteins as they are translocated into the lumen of the endoplasmic reticulum. Essential for the SPC catalytic activity, possibly by stabilizing and positioning the active center of the complex close to the lumenal surface. The polypeptide is Signal peptidase complex subunit 3A (Arabidopsis thaliana (Mouse-ear cress)).